Consider the following 188-residue polypeptide: Probable RNA 2'-phosphotransferase (188 aa).

It belongs to the KptA/TPT1 family.

Its function is as follows. Removes the 2'-phosphate from RNA via an intermediate in which the phosphate is ADP-ribosylated by NAD followed by a presumed transesterification to release the RNA and generate ADP-ribose 1''-2''-cyclic phosphate (APPR&gt;P). May function as an ADP-ribosylase. The sequence is that of Probable RNA 2'-phosphotransferase from Lacticaseibacillus paracasei (strain ATCC 334 / BCRC 17002 / CCUG 31169 / CIP 107868 / KCTC 3260 / NRRL B-441) (Lactobacillus paracasei).